The chain runs to 108 residues: UPF0102 protein Sputcn32_3693 (108 aa).

It belongs to the UPF0102 family.

This Shewanella putrefaciens (strain CN-32 / ATCC BAA-453) protein is UPF0102 protein Sputcn32_3693.